The sequence spans 424 residues: Tyrosine--tRNA ligase (424 aa).

Tyr37 contacts L-tyrosine. The short motif at 42–51 (PTADSLHLGH) is the 'HIGH' region element. Positions 175 and 179 each coordinate L-tyrosine. Positions 235-239 (KFGKT) match the 'KMSKS' region motif. Lys238 provides a ligand contact to ATP. An S4 RNA-binding domain is found at 357-414 (ADLMQALVDAELQPSRGQARKTIASNAVTINGEKQSDPEYIFNDEDRLFGRYTLLRRG).

The protein belongs to the class-I aminoacyl-tRNA synthetase family. TyrS type 1 subfamily. As to quaternary structure, homodimer.

It is found in the cytoplasm. The catalysed reaction is tRNA(Tyr) + L-tyrosine + ATP = L-tyrosyl-tRNA(Tyr) + AMP + diphosphate + H(+). Its function is as follows. Catalyzes the attachment of tyrosine to tRNA(Tyr) in a two-step reaction: tyrosine is first activated by ATP to form Tyr-AMP and then transferred to the acceptor end of tRNA(Tyr). This is Tyrosine--tRNA ligase from Salmonella agona (strain SL483).